A 421-amino-acid polypeptide reads, in one-letter code: Zinc metalloproteinase-disintegrin-like lachestatin-2 (421 aa).

A Peptidase M12B domain is found at 10–206 (KYVKLVLVAD…DMPQCILEKP (197 aa)). 3 disulfide bridges follow: Cys-121–Cys-201, Cys-161–Cys-185, and Cys-163–Cys-168. Position 146 (His-146) interacts with Zn(2+). Glu-147 is an active-site residue. Positions 150 and 156 each coordinate Zn(2+). In terms of domain architecture, Disintegrin spans 214–299 (PPVCGNYFVE…AECTDRFQRN (86 aa)). Positions 216, 219, 221, 223, 226, and 229 each coordinate Ca(2+). 14 disulfide bridges follow: Cys-217–Cys-246, Cys-228–Cys-241, Cys-230–Cys-236, Cys-240–Cys-263, Cys-254–Cys-260, Cys-259–Cys-285, Cys-272–Cys-292, Cys-279–Cys-310, Cys-303–Cys-315, Cys-322–Cys-372, Cys-337–Cys-383, Cys-350–Cys-360, Cys-367–Cys-409, and Cys-403–Cys-414. The D/ECD-tripeptide motif lies at 278–280 (ECD). Asp-280, Met-281, Asp-283, Asp-294, and Arg-295 together coordinate Ca(2+). Residue Asn-312 is glycosylated (N-linked (GlcNAc...) asparagine).

It belongs to the venom metalloproteinase (M12B) family. P-III subfamily. P-IIIc sub-subfamily. As to quaternary structure, homodimer; disulfide-linked. Zn(2+) serves as cofactor. As to expression, expressed by the venom gland.

It localises to the secreted. Its function is as follows. Snake venom zinc metalloprotease that induces apoptosis in vascular endothelial cells (VEC), without degrading the extracellular matrix (it cannot cleave collagen) or inhibiting adhesion of VEC. Has also fibrinogenolytic and hemorrhagic activities. The polypeptide is Zinc metalloproteinase-disintegrin-like lachestatin-2 (Lachesis muta rhombeata (Bushmaster)).